A 337-amino-acid polypeptide reads, in one-letter code: Probable poly [ADP-ribose] polymerase DDB_G0278045 (337 aa).

The PARP catalytic domain maps to 21-231 (KKWDIIYKQR…NNNKNKNKNN (211 aa)). A compositionally biased stretch (low complexity) spans 218–242 (NNTNNNNKNKNKNNNKNNNKNIKIQ). Residues 218-247 (NNTNNNNKNKNKNNNKNNNKNIKIQNENKN) are disordered.

It catalyses the reaction L-aspartyl-[protein] + NAD(+) = 4-O-(ADP-D-ribosyl)-L-aspartyl-[protein] + nicotinamide. The catalysed reaction is L-glutamyl-[protein] + NAD(+) = 5-O-(ADP-D-ribosyl)-L-glutamyl-[protein] + nicotinamide. It carries out the reaction NAD(+) + (ADP-D-ribosyl)n-acceptor = nicotinamide + (ADP-D-ribosyl)n+1-acceptor + H(+).. This Dictyostelium discoideum (Social amoeba) protein is Probable poly [ADP-ribose] polymerase DDB_G0278045.